A 253-amino-acid polypeptide reads, in one-letter code: MPLLPSTVGLAGLLFWAGQAVNALIMPNATPAPAQPESTAMRLLSGLEVPRYRRKRHISVRDMNALLDYHNHIRASVYPPAANMEYMVWDKRLARAAEAWATQCIWAHGPSQLMRYVGQNLSIHSGQYRSVVDLMKSWSEEKWHYLFPAPRDCNPHCPWRCDGPTCSHYTQMVWASSNRLGCAIHTCSSISVWGNTWHRAAYLVCNYAIKGNWIGESPYKMGKPCSSCPPSYQGSCNSNMCFKGLKSNKFTWF.

Positions 1-24 (MPLLPSTVGLAGLLFWAGQAVNAL) are cleaved as a signal peptide. The propeptide occupies 25–56 (IMPNATPAPAQPESTAMRLLSGLEVPRYRRKR). The SCP domain occupies 67 to 207 (LDYHNHIRAS…HRAAYLVCNY (141 aa)). Residue Asn120 is glycosylated (N-linked (GlcNAc...) asparagine).

Belongs to the CRISP family.

It is found in the secreted. Its function is as follows. Putative serine protease inhibitor. The sequence is that of Peptidase inhibitor R3HDML (R3HDML) from Homo sapiens (Human).